The chain runs to 138 residues: Cysteine desulfuration protein SufE (138 aa).

Catalysis depends on C51, which acts as the Cysteine persulfide intermediate.

This sequence belongs to the SufE family. As to quaternary structure, homodimer. Interacts with SufS.

The protein resides in the cytoplasm. It participates in cofactor biosynthesis; iron-sulfur cluster biosynthesis. In terms of biological role, participates in cysteine desulfuration mediated by SufS. Cysteine desulfuration mobilizes sulfur from L-cysteine to yield L-alanine and constitutes an essential step in sulfur metabolism for biosynthesis of a variety of sulfur-containing biomolecules. Functions as a sulfur acceptor for SufS, by mediating the direct transfer of the sulfur atom from the S-sulfanylcysteine of SufS, an intermediate product of cysteine desulfuration process. The chain is Cysteine desulfuration protein SufE from Klebsiella pneumoniae subsp. pneumoniae (strain ATCC 700721 / MGH 78578).